Consider the following 932-residue polypeptide: Isoleucine--tRNA ligase (932 aa).

Positions 57–67 match the 'HIGH' region motif; it reads PYANGDIHIGT. L-isoleucyl-5'-AMP is bound at residue E559. A 'KMSKS' region motif is present at residues 600-604; it reads KMSKS. K603 is a binding site for ATP. Residues C899, C902, C919, and C922 each contribute to the Zn(2+) site.

This sequence belongs to the class-I aminoacyl-tRNA synthetase family. IleS type 1 subfamily. Monomer. Zn(2+) serves as cofactor.

The protein resides in the cytoplasm. The enzyme catalyses tRNA(Ile) + L-isoleucine + ATP = L-isoleucyl-tRNA(Ile) + AMP + diphosphate. Catalyzes the attachment of isoleucine to tRNA(Ile). As IleRS can inadvertently accommodate and process structurally similar amino acids such as valine, to avoid such errors it has two additional distinct tRNA(Ile)-dependent editing activities. One activity is designated as 'pretransfer' editing and involves the hydrolysis of activated Val-AMP. The other activity is designated 'posttransfer' editing and involves deacylation of mischarged Val-tRNA(Ile). The sequence is that of Isoleucine--tRNA ligase from Thermoanaerobacter pseudethanolicus (strain ATCC 33223 / 39E) (Clostridium thermohydrosulfuricum).